A 255-amino-acid polypeptide reads, in one-letter code: Electron transfer flavoprotein subunit beta (255 aa).

An N-acetylalanine modification is found at A2. Residues A9, 39–42 (NPFC), C66, and 123–134 (GKQAIDDDCNQT) each bind AMP. Residues 183–205 (ADLRLNEPRYATLPNIMKAKKKK) are recognition loop. K200 is subject to N6,N6,N6-trimethyllysine; by ETFBKMT; alternate. N6-acetyllysine; alternate is present on K200. Position 200 is an N6-methyllysine; alternate (K200). N6,N6,N6-trimethyllysine; by ETFBKMT is present on K203. At K210 the chain carries N6-acetyllysine; alternate. N6-succinyllysine; alternate is present on K210. Phosphoserine occurs at positions 223 and 226. The residue at position 238 (K238) is an N6-acetyllysine. K248 carries the N6-acetyllysine; alternate modification. Residue K248 is modified to N6-succinyllysine; alternate.

This sequence belongs to the ETF beta-subunit/FixA family. As to quaternary structure, heterodimer composed of ETFA and ETFB. Identified in a complex that contains ETFA, ETFB and ETFRF1. Interacts with ACADM. Methylated. Trimethylation at Lys-200 and Lys-203 may negatively regulate the activity in electron transfer from acyl-CoA dehydrogenases.

The protein resides in the mitochondrion matrix. Its function is as follows. Heterodimeric electron transfer flavoprotein that accepts electrons from several mitochondrial dehydrogenases, including acyl-CoA dehydrogenases, glutaryl-CoA and sarcosine dehydrogenase. It transfers the electrons to the main mitochondrial respiratory chain via ETF-ubiquinone oxidoreductase. Required for normal mitochondrial fatty acid oxidation and normal amino acid metabolism. ETFB binds an AMP molecule that probably has a purely structural role. In Sus scrofa (Pig), this protein is Electron transfer flavoprotein subunit beta.